The chain runs to 189 residues: Cancer/testis antigen family 45 member A5 (189 aa).

Over residues 1-23 the composition is skewed to basic and acidic residues; sequence MTDKTEKVAVDPETVFKRPRECD. Disordered stretches follow at residues 1 to 27 and 82 to 118; these read MTDK…SPSY and DGMM…SPKS.

This sequence belongs to the CT45 family. In terms of tissue distribution, testis specific. Expressed in cancer cell lines.

The protein resides in the nucleus. The protein is Cancer/testis antigen family 45 member A5 of Homo sapiens (Human).